The primary structure comprises 550 residues: Probable endochitinase (550 aa).

Residues 1–16 (MLHYLATILWLAVAHA) form the signal peptide. N-linked (GlcNAc...) asparagine; by host glycans are attached at residues Asn146 and Asn172. One can recognise a GH18 domain in the interval 147–547 (KTVAAYFVEW…NAMNERVRVK (401 aa)). Residue Glu304 is the Proton donor of the active site. Residue Asn344 is glycosylated (N-linked (GlcNAc...) asparagine; by host). A Prevents secretion from ER motif is present at residues 547-550 (KDEL).

It belongs to the glycosyl hydrolase 18 family. Chitinase class II subfamily.

It is found in the host endoplasmic reticulum lumen. It carries out the reaction Random endo-hydrolysis of N-acetyl-beta-D-glucosaminide (1-&gt;4)-beta-linkages in chitin and chitodextrins.. This Orgyia pseudotsugata (Douglas-fir tussock moth) protein is Probable endochitinase.